The following is a 389-amino-acid chain: Major outer membrane porin (389 aa).

It belongs to the chlamydial porin (CP) (TC 1.B.2) family. As to quaternary structure, part of a disulfide cross-linked outer membrane complex (COMC) composed of the major outer membrane porin (MOMP), the small cysteine-rich protein (OmcA) and the large cysteine-rich periplasmic protein (OmcB).

It is found in the cell outer membrane. In elementary bodies (EBs, the infectious stage, which is able to survive outside the host cell) provides the structural integrity of the outer envelope through disulfide cross-links with the small cysteine-rich protein and the large cysteine-rich periplasmic protein. It has been described in publications as the Sarkosyl-insoluble COMC (Chlamydia outer membrane complex), and serves as the functional equivalent of peptidoglycan. Functionally, permits diffusion of specific solutes through the outer membrane. The chain is Major outer membrane porin (ompA) from Chlamydia pneumoniae (Chlamydophila pneumoniae).